The primary structure comprises 482 residues: Lipoamide acyltransferase component of branched-chain alpha-keto acid dehydrogenase complex, mitochondrial (482 aa).

The transit peptide at 1 to 61 (MAAALVLRTW…QWLKTTAALQ (61 aa)) directs the protein to the mitochondrion. Residues 64–139 (IVQFKLSDIG…YVGKPLVDIE (76 aa)) form the Lipoyl-binding domain. Lys-105 bears the N6-lipoyllysine mark. At Lys-133 the chain carries N6-succinyllysine. The tract at residues 145-160 (DSEEDVVETPAVSHDE) is critical for association with PPM1K. The segment at 146-171 (SEEDVVETPAVSHDEHTHQEIKGQKT) is disordered. Residues 157–168 (SHDEHTHQEIKG) show a composition bias toward basic and acidic residues. In terms of domain architecture, Peripheral subunit-binding (PSBD) spans 172-209 (LATPAVRRLAMENNIKLSEVIGSGKDGRILKEDILNYL). Lys-196 carries the post-translational modification N6-acetyllysine; alternate. Lys-196 is modified (N6-succinyllysine; alternate). At Lys-202 the chain carries N6-acetyllysine. Positions 218–230 (PPSPKAEIMPPPP) are enriched in pro residues. The segment at 218–238 (PPSPKAEIMPPPPKPKDRTIP) is disordered. A Phosphoserine modification is found at Ser-220. Lys-243 and Lys-250 each carry N6-acetyllysine. The residue at position 261 (Lys-261) is an N6-succinyllysine. The residue at position 289 (Lys-289) is an N6-acetyllysine; alternate. Lys-289 bears the N6-succinyllysine; alternate mark. Arg-291 serves as a coordination point for CoA. An N6-acetyllysine mark is found at Lys-295 and Lys-304. CoA contacts are provided by Ser-306, Asp-349, Gln-378, Ser-399, Asn-400, Ser-403, Gly-424, and Ile-426. Lys-435 is subject to N6-acetyllysine. The residue at position 440 (Lys-440) is an N6-acetyllysine; alternate. Lys-440 carries the N6-succinyllysine; alternate modification. Active-site residues include His-452 and Asp-456.

The protein belongs to the 2-oxoacid dehydrogenase family. As to quaternary structure, forms a 24-polypeptide structural core with octahedral symmetry that represents the E2 component of the branched-chain alpha-ketoacid dehydrogenase (BCKDH) complex. The BCKDH complex is composed of three major building blocks E1, E2 and E3. It is organized around E2, a 24-meric cubic core composed of DBT, to which are associated 6 to 12 copies of E1, and approximately 6 copies of the dehydrogenase E3, a DLD dimer. Interacts with PPM1K with a 24:1 stoichiometry; the N-terminal region (residues 49-61) of PPM1K and C-terminal linker of the lipoyl domain of DBT/E2 (residues 145-160) are critical for this interaction whereas the lipoyl prosthetic group is dispensable. This interaction requires colocalization in mitochondria. PPM1K competes with BCKDK for binding to DBT; this interaction is modulated by branched-chain alpha-keto acids (BCKAs). At steady state, BCKDH holoenzyme preferentially binds BCKDK and BCKDHA is phosphorylated. In response to high levels of BCKAs, BCKDK is replaced by PPM1K leading to BCKDHA dephosphorylation. (R)-lipoate is required as a cofactor. As to expression, expressed in kidney (at protein level).

Its subcellular location is the mitochondrion matrix. The catalysed reaction is N(6)-[(R)-dihydrolipoyl]-L-lysyl-[protein] + 2-methylpropanoyl-CoA = N(6)-[(R)-S(8)-2-methylpropanoyldihydrolipoyl]-L-lysyl-[protein] + CoA. Functionally, the branched-chain alpha-keto dehydrogenase complex catalyzes the overall conversion of alpha-keto acids to acyl-CoA and CO(2). It contains multiple copies of three enzymatic components: branched-chain alpha-keto acid decarboxylase (E1), lipoamide acyltransferase (E2) and lipoamide dehydrogenase (E3). Within this complex, the catalytic function of this enzyme is to accept, and to transfer to coenzyme A, acyl groups that are generated by the branched-chain alpha-keto acid decarboxylase component. The chain is Lipoamide acyltransferase component of branched-chain alpha-keto acid dehydrogenase complex, mitochondrial (DBT) from Bos taurus (Bovine).